Here is a 251-residue protein sequence, read N- to C-terminus: Probable transcriptional regulatory protein MSMEG_2940/MSMEI_2866 (251 aa).

Belongs to the TACO1 family.

The protein resides in the cytoplasm. This chain is Probable transcriptional regulatory protein MSMEG_2940/MSMEI_2866, found in Mycolicibacterium smegmatis (strain ATCC 700084 / mc(2)155) (Mycobacterium smegmatis).